The primary structure comprises 615 residues: Putative DNA ligase 205R (615 aa).

K101 acts as the N6-AMP-lysine intermediate in catalysis.

This sequence belongs to the NAD-dependent DNA ligase family.

It carries out the reaction NAD(+) + (deoxyribonucleotide)n-3'-hydroxyl + 5'-phospho-(deoxyribonucleotide)m = (deoxyribonucleotide)n+m + AMP + beta-nicotinamide D-nucleotide.. Functionally, catalyzes the formation of phosphodiester linkages between 5'-phosphoryl and 3'-hydroxyl groups in double-stranded DNA using NAD as a coenzyme and as the energy source for the reaction. The polypeptide is Putative DNA ligase 205R (Invertebrate iridescent virus 6 (IIV-6)).